The sequence spans 430 residues: Proteasome-activating nucleotidase (430 aa).

Residues 9–89 adopt a coiled-coil conformation; sequence TELKKEKKAF…LRRELDRMRV (81 aa). ATP-binding positions include 214–219 and His353; that span reads GTGKTL. Positions 428–430 are docks into pockets in the proteasome alpha-ring to cause gate opening; sequence LYR.

It belongs to the AAA ATPase family. In terms of assembly, homohexamer. The hexameric complex has a two-ring architecture resembling a top hat that caps the 20S proteasome core at one or both ends. Alone, can form a complex composed of two stacked hexameric rings in vitro. Upon ATP-binding, the C-terminus of PAN interacts with the alpha-rings of the proteasome core by binding to the intersubunit pockets.

Its subcellular location is the cytoplasm. Its activity is regulated as follows. ATPase activity is inhibited by EDTA, N-ethylmaleimide (NEM) and p-chloromercuriphenyl-sulfonic acid (PCMS) in vitro. ATPase which is responsible for recognizing, binding, unfolding and translocation of substrate proteins into the archaeal 20S proteasome core particle. Is essential for opening the gate of the 20S proteasome via an interaction with its C-terminus, thereby allowing substrate entry and access to the site of proteolysis. Thus, the C-termini of the proteasomal ATPase function like a 'key in a lock' to induce gate opening and therefore regulate proteolysis. Unfolding activity requires energy from ATP hydrolysis, whereas ATP binding alone promotes ATPase-20S proteasome association which triggers gate opening, and supports translocation of unfolded substrates. In addition to ATP, is able to cleave other nucleotide triphosphates such as CTP, GTP and UTP, but hydrolysis of these other nucleotides is less effective in promoting proteolysis than ATP. Moreover, PAN by itself can function as a chaperone in vitro. The sequence is that of Proteasome-activating nucleotidase from Methanocaldococcus jannaschii (strain ATCC 43067 / DSM 2661 / JAL-1 / JCM 10045 / NBRC 100440) (Methanococcus jannaschii).